A 391-amino-acid polypeptide reads, in one-letter code: mRNA-capping enzyme subunit alpha (391 aa).

The active-site N6-GMP-lysine intermediate is lysine 63. The disordered stretch occupies residues 363-391 (KERNRRPRDEDRKRVGGDDHDHGAKRARQ).

The protein belongs to the eukaryotic GTase family. In terms of assembly, heterodimer. The mRNA-capping enzyme is composed of two separate chains alpha and beta, respectively a mRNA guanylyltransferase and an mRNA 5'-triphosphate monophosphatase.

Its subcellular location is the nucleus. The enzyme catalyses a 5'-end diphospho-ribonucleoside in mRNA + GTP + H(+) = a 5'-end (5'-triphosphoguanosine)-ribonucleoside in mRNA + diphosphate. Functionally, second step of mRNA capping. Transfer of the GMP moiety of GTP to the 5'-end of RNA via an enzyme-GMP covalent reaction intermediate. This is mRNA-capping enzyme subunit alpha (CEG1) from Yarrowia lipolytica (strain CLIB 122 / E 150) (Yeast).